Here is a 466-residue protein sequence, read N- to C-terminus: 3-isopropylmalate dehydratase large subunit 1 (466 aa).

Cysteine 347, cysteine 407, and cysteine 410 together coordinate [4Fe-4S] cluster.

Belongs to the aconitase/IPM isomerase family. LeuC type 1 subfamily. As to quaternary structure, heterodimer of LeuC and LeuD. [4Fe-4S] cluster is required as a cofactor.

It carries out the reaction (2R,3S)-3-isopropylmalate = (2S)-2-isopropylmalate. It functions in the pathway amino-acid biosynthesis; L-leucine biosynthesis; L-leucine from 3-methyl-2-oxobutanoate: step 2/4. Functionally, catalyzes the isomerization between 2-isopropylmalate and 3-isopropylmalate, via the formation of 2-isopropylmaleate. The sequence is that of 3-isopropylmalate dehydratase large subunit 1 from Salmonella choleraesuis (strain SC-B67).